Consider the following 440-residue polypeptide: Alpha-methylserine aldolase (440 aa).

K255 is modified (N6-(pyridoxal phosphate)lysine).

Belongs to the SHMT family. Alpha-methylserine aldolase subfamily. Homodimer. Pyridoxal 5'-phosphate is required as a cofactor.

It carries out the reaction 2-methyl-L-serine = formaldehyde + L-alanine. The enzyme catalyses 2-ethyl-L-serine = (2S)-2-aminobutanoate + formaldehyde. With respect to regulation, in the alpha-methyl-L-serine synthesis reaction, activity is inhibited by an excess amount of formaldehyde (at a concentration greater than 4 mM). Formaldehyde release activity is reduced by the sulfhydryl reagent N-ethylmaleimide, iodoacetate amide and iodoacetic acid, but not by dithiothreitol and 2-mercaptoethanol. Activity is enhanced by 1 mM of manganese chloride. Its function is as follows. Catalyzes the reversible interconversion of alpha-methyl-L-serine to L-alanine and formaldehyde. Can also catalyze the synthesis of alpha-ethyl-L-serine from L-2-aminobutyric acid and formaldehyde. Also shows low alanine racemase activity. Cannot use alpha-methyl-D-serine, L-serine, D-serine, (S)-2-amino-1-propanol, (R)-2-amino-1-propanol, (S)-alpha-hydroxymethyltyrosine, (R)-alpha-hydroxymethyltyrosine, alpha-iso-butyl-DL-serine, alpha-iso-propyl-DL-serine or alpha-benzyl-DL-serine. Cannot use D-alanine instead of L-alanine as the substrate for alpha-methyl-L-serine synthesis. Does not require tetrahydrofolate (THF) for activity. The protein is Alpha-methylserine aldolase of Variovorax paradoxus.